A 254-amino-acid chain; its full sequence is Persulfide dioxygenase ETHE1, mitochondrial (254 aa).

The N-terminal 7 residues, 1–7 (MASAVVR), are a transit peptide targeting the mitochondrion. Residues S14, S17, and S19 each carry the phosphoserine modification. K32 bears the N6-acetyllysine; alternate mark. K32 carries the N6-succinyllysine; alternate modification. Residue K66 is modified to N6-acetyllysine. Fe cation contacts are provided by H79, H135, and D154. K172 is modified (N6-acetyllysine; alternate). K172 carries the post-translational modification N6-succinyllysine; alternate.

The protein belongs to the metallo-beta-lactamase superfamily. Glyoxalase II family. As to quaternary structure, homodimer. Monomer. Interacts with TST. May interact with RELA. Fe(2+) serves as cofactor.

It is found in the cytoplasm. The protein resides in the nucleus. It localises to the mitochondrion matrix. It carries out the reaction S-sulfanylglutathione + O2 + H2O = sulfite + glutathione + 2 H(+). First described as a protein that can shuttle between the nucleus and the cytoplasm and suppress p53-induced apoptosis by sequestering the transcription factor RELA/NFKB3 in the cytoplasm and preventing its accumulation in the nucleus. Sulfur dioxygenase that plays an essential role in hydrogen sulfide catabolism in the mitochondrial matrix. Hydrogen sulfide (H(2)S) is first oxidized by SQRDL, giving rise to cysteine persulfide residues. ETHE1 consumes molecular oxygen to catalyze the oxidation of the persulfide, once it has been transferred to a thiophilic acceptor, such as glutathione (R-SSH). Plays an important role in metabolic homeostasis in mitochondria by metabolizing hydrogen sulfide and preventing the accumulation of supraphysiological H(2)S levels that have toxic effects, due to the inhibition of cytochrome c oxidase. The chain is Persulfide dioxygenase ETHE1, mitochondrial (Ethe1) from Mus musculus (Mouse).